A 126-amino-acid chain; its full sequence is MSMQIEIKDGRSDNSPLPERKLVTLIQESYDSLKDDNEINLSTESTSNLLIKLVLEKLEKHSSLYKYIASVTTLNIEGLNEENANFSLKNDIGASWESKKDGIFNYKLEDKNSNECYLITILWLHK.

An N-acetylserine modification is found at Ser-2.

It belongs to the TDA2 family.

It is found in the cytoplasm. It localises to the cell projection. The chain is Topoisomerase I damage affected protein 2 (TDA2) from Saccharomyces cerevisiae (strain RM11-1a) (Baker's yeast).